The following is a 138-amino-acid chain: Basic phospholipase A2 ammodytoxin B (138 aa).

Residues 1–16 (MRTLWIVAVCLIGVEG) form the signal peptide. 7 cysteine pairs are disulfide-bonded: cysteine 42/cysteine 131, cysteine 44/cysteine 60, cysteine 59/cysteine 111, cysteine 65/cysteine 138, cysteine 66/cysteine 104, cysteine 73/cysteine 97, and cysteine 91/cysteine 102. Ca(2+) is bound by residues tyrosine 43, glycine 45, and glycine 47. Residue histidine 63 is part of the active site. Aspartate 64 contacts Ca(2+). The active site involves aspartate 105.

It belongs to the phospholipase A2 family. Group II subfamily. D49 sub-subfamily. In terms of assembly, monomer. Binds to calmodulin, coagulation factor X (F10), M-type PLA2 receptor (R-180), 14-3-3 proteins gamma (YWHAG) and epsilon (YWHAE), and R25, a mitochondrial membrane protein. The cofactor is Ca(2+). As to expression, expressed by the venom gland.

Its subcellular location is the secreted. The protein localises to the host cytoplasm. It localises to the host cytosol. It carries out the reaction a 1,2-diacyl-sn-glycero-3-phosphocholine + H2O = a 1-acyl-sn-glycero-3-phosphocholine + a fatty acid + H(+). Functionally, snake venom phospholipase A2 (PLA2) that acts as a presynaptic neurotoxin, an inhibitor of blood coagulation, and has been found to bind with high affinity to intracellular proteins. The response of indirectly stimulated neuromuscular preparations to ammodytoxin (Atx) is triphasic. The first phase, the transient inhibition of the acetylcholine (ACh) release, starts soon after the addition of Atx and lasts for several minutes. This phase is probably independent of Atx enzymatic activity. The effect may be due to the specific binding of the toxin to presynaptic receptors. These receptors, called N-type receptors, are still unidentified. It is noteworthy that a neuronal isoform of the M-type PLA2 receptor (R180) has been identified as a high-affinity receptor for Atx in neuronal plasma membranes. It was demonstrated however that this receptor is not essential for expression of neurotoxicity by Atx. The second phase corresponds to an augmentation of neurotransmitter release. A peak is reached 10-20 minutes after exposure of the preparation to Atx and is followed by a gradual reduction. In this phase, the enzymatic activity of Atx of the mammalian is not significant. It is speculated that the increased release of neurotransmitter in this phase is induced by the interference of Atx with voltage-gated potassium channels. Measurements of ionic currents showed however that voltage-gated potassium channels are not affected by Atx. The third phase of the response of neuromuscular preparations to Atx, which corresponds to a complete and irreversible paralysis, is clearly dependent on the hydrolytic activity of the toxin. In addition to its presynaptic neurotoxicity, Atx shows an anticoagulant activity by binding with high affinity to activated coagulation factor X (F10) thus inhibiting the formation of the prothrombinase complex (FX/FV) and its activity (IC(50) is 82 nM). Surprisingly, Atx was discovered to bind intracellular proteins such as calmodulin (CaM), 14-3-3 proteins gamma (YWHAG) and epsilon (YWHAE) (by similarity with AtxC), as well as R25 (by similarity with AtxC), a mitochondrial integral membrane protein found in cerebral cortex. These findings raised a doubt about the dogma of the exclusively extracellular action of PLA2s, defended by the potential instability of these molecules in the reducing environment of the eukaryotic cytosol coupled with their possible inability to act as enzymes in this cellular compartment, due to too low concentration of calcium ions. This hypothesis was challenged efficiently by demonstrating the internalization of AtxA into a culture cells, but still remains to be directly demonstrated in vivo. PLA2 catalyzes the calcium-dependent hydrolysis of the 2-acyl groups in 3-sn-phosphoglycerides. The polypeptide is Basic phospholipase A2 ammodytoxin B (Vipera ammodytes ammodytes (Western sand viper)).